We begin with the raw amino-acid sequence, 569 residues long: 2-succinyl-5-enolpyruvyl-6-hydroxy-3-cyclohexene-1-carboxylate synthase (569 aa).

Belongs to the TPP enzyme family. MenD subfamily. Homodimer. Mg(2+) serves as cofactor. It depends on Mn(2+) as a cofactor. Thiamine diphosphate is required as a cofactor.

It carries out the reaction isochorismate + 2-oxoglutarate + H(+) = 5-enolpyruvoyl-6-hydroxy-2-succinyl-cyclohex-3-ene-1-carboxylate + CO2. It functions in the pathway quinol/quinone metabolism; 1,4-dihydroxy-2-naphthoate biosynthesis; 1,4-dihydroxy-2-naphthoate from chorismate: step 2/7. Its pathway is quinol/quinone metabolism; menaquinone biosynthesis. Functionally, catalyzes the thiamine diphosphate-dependent decarboxylation of 2-oxoglutarate and the subsequent addition of the resulting succinic semialdehyde-thiamine pyrophosphate anion to isochorismate to yield 2-succinyl-5-enolpyruvyl-6-hydroxy-3-cyclohexene-1-carboxylate (SEPHCHC). This is 2-succinyl-5-enolpyruvyl-6-hydroxy-3-cyclohexene-1-carboxylate synthase from Shewanella sediminis (strain HAW-EB3).